Reading from the N-terminus, the 511-residue chain is MNAQAILVLDFGSQYSQLIARRIREIGVYTKVIPYYTPLKEIKNMNISGIILSGSPASVYSKEAPTLDMEIFNLKIPVLGICYGMQIIVKLFGGLVSKDSKQEYGRSEIFLKDEKSLLFSELPNKFQIIMSHGDSIEKIPDNFKQLAFTKNCIASISNETQKIYGLQFHPEVTHSEFGDQILKNFVFKICQAQINWSLEGNLETIVKKIKLKVGSKKVILGLSGGTDSLVCALLIKKAINENLICVFVNTGLLRKNENKKILELKHQYDLNIKYIDASTKFLNRLKNISDPEEKRKIIGKEFVDVFEKITLEDQNIEYLAQGTIYSDVIESKSKDSSSSKIKSHHNVGGLPDKMSLKLLEPLNEFFKDEIIQIGINLGIKKESLYRHPFPGPGLAIRIIGEVTQEKINILQEADNILTEELFINDLYYQIRQAFVVLLPVKSVGVMGDQRTYEYTAVIRCVNTQDFMTAEWTELPYSFLKKVSSRIINEVRGINRVCYDISSKPPSTIEWE.

Positions 5–195 (AILVLDFGSQ…VFKICQAQIN (191 aa)) constitute a Glutamine amidotransferase type-1 domain. Cysteine 82 acts as the Nucleophile in catalysis. Residues histidine 169 and glutamate 171 contribute to the active site. The GMPS ATP-PPase domain maps to 196-386 (WSLEGNLETI…LGIKKESLYR (191 aa)). ATP is bound at residue 223 to 229 (SGGTDSL).

In terms of assembly, homodimer.

It catalyses the reaction XMP + L-glutamine + ATP + H2O = GMP + L-glutamate + AMP + diphosphate + 2 H(+). The protein operates within purine metabolism; GMP biosynthesis; GMP from XMP (L-Gln route): step 1/1. Its function is as follows. Catalyzes the synthesis of GMP from XMP. The chain is GMP synthase [glutamine-hydrolyzing] (guaA) from Borreliella burgdorferi (strain N40) (Borrelia burgdorferi).